Reading from the N-terminus, the 112-residue chain is uncharacterized protein (112 aa).

The HTH cro/C1-type domain occupies 6–60 (LRQLRKAHKLTMEQLAEKIGIAKSSYGGYEAESKKPPLDKLVILARLYDVSVDYI). Residues 17-36 (MEQLAEKIGIAKSSYGGYEA) constitute a DNA-binding region (H-T-H motif).

This is an uncharacterized protein from Bacillus subtilis (strain 168).